Reading from the N-terminus, the 609-residue chain is UvrABC system protein C (609 aa).

In terms of domain architecture, GIY-YIG spans 13–91 (HEPGVYRMYD…IKLYQPRYNV (79 aa)). In terms of domain architecture, UVR spans 201 to 236 (QQVLDYLIGKMEQASRNLDFEQAARYRDQIQAVRSV).

The protein belongs to the UvrC family. Interacts with UvrB in an incision complex.

The protein resides in the cytoplasm. The UvrABC repair system catalyzes the recognition and processing of DNA lesions. UvrC both incises the 5' and 3' sides of the lesion. The N-terminal half is responsible for the 3' incision and the C-terminal half is responsible for the 5' incision. The polypeptide is UvrABC system protein C (Haemophilus influenzae (strain 86-028NP)).